A 231-amino-acid polypeptide reads, in one-letter code: 5'-methylthioadenosine/S-adenosylhomocysteine nucleosidase (231 aa).

The active-site Proton acceptor is the glutamate 12. Substrate contacts are provided by residues glycine 78, valine 153, and 174–175; that span reads ME. Aspartate 198 functions as the Proton donor in the catalytic mechanism.

This sequence belongs to the PNP/UDP phosphorylase family. MtnN subfamily.

The catalysed reaction is S-adenosyl-L-homocysteine + H2O = S-(5-deoxy-D-ribos-5-yl)-L-homocysteine + adenine. The enzyme catalyses S-methyl-5'-thioadenosine + H2O = 5-(methylsulfanyl)-D-ribose + adenine. It catalyses the reaction 5'-deoxyadenosine + H2O = 5-deoxy-D-ribose + adenine. Its pathway is amino-acid biosynthesis; L-methionine biosynthesis via salvage pathway; S-methyl-5-thio-alpha-D-ribose 1-phosphate from S-methyl-5'-thioadenosine (hydrolase route): step 1/2. Functionally, catalyzes the irreversible cleavage of the glycosidic bond in both 5'-methylthioadenosine (MTA) and S-adenosylhomocysteine (SAH/AdoHcy) to adenine and the corresponding thioribose, 5'-methylthioribose and S-ribosylhomocysteine, respectively. Also cleaves 5'-deoxyadenosine, a toxic by-product of radical S-adenosylmethionine (SAM) enzymes, into 5-deoxyribose and adenine. In Aliivibrio salmonicida (strain LFI1238) (Vibrio salmonicida (strain LFI1238)), this protein is 5'-methylthioadenosine/S-adenosylhomocysteine nucleosidase.